A 393-amino-acid polypeptide reads, in one-letter code: Short-chain dehydrogenase/reductase family 42E member 1 (393 aa).

The active-site Proton acceptor is Tyr152. Lys156 provides a ligand contact to NAD(+). 2 helical membrane-spanning segments follow: residues Leu282–Gly302 and Gly371–Leu391.

Belongs to the 3-beta-HSD family.

The protein localises to the membrane. This Homo sapiens (Human) protein is Short-chain dehydrogenase/reductase family 42E member 1 (SDR42E1).